The sequence spans 804 residues: Elongation factor G, mitochondrial (804 aa).

The transit peptide at 1-63 (MSMHRVARAV…RHFSQSPIIR (63 aa)) directs the protein to the mitochondrion. Residues 99-385 (RRVRNIGIAA…AVCDYLPNPA (287 aa)) enclose the tr-type G domain. GTP contacts are provided by residues 108–115 (AHIDSGKT), 183–187 (DTPGH), and 237–240 (NKMD).

Belongs to the TRAFAC class translation factor GTPase superfamily. Classic translation factor GTPase family. EF-G/EF-2 subfamily.

Its subcellular location is the mitochondrion. The protein operates within protein biosynthesis; polypeptide chain elongation. In terms of biological role, mitochondrial GTPase that catalyzes the GTP-dependent ribosomal translocation step during translation elongation. During this step, the ribosome changes from the pre-translocational (PRE) to the post-translocational (POST) state as the newly formed A-site-bound peptidyl-tRNA and P-site-bound deacylated tRNA move to the P and E sites, respectively. Catalyzes the coordinated movement of the two tRNA molecules, the mRNA and conformational changes in the ribosome. The chain is Elongation factor G, mitochondrial (mef1) from Botryotinia fuckeliana (strain B05.10) (Noble rot fungus).